Reading from the N-terminus, the 197-residue chain is MRTATIKRKTKETDIEVTVDLDGTGVANAATGIGFFDHMLDLLAKHSRIDLTVKAVGDLHVDFHHTTEDVGIALGQAVKQALGNMAGITRYATVLMPMDETLTRVVIDVSGRPFLVFKADFPRDKIGEFDTELVREWFQAFAMNAGVTLHVETLYGENSHHIAESCFKGLARALRAAVAIDPKTAGEVPSTKGQLGG.

Belongs to the imidazoleglycerol-phosphate dehydratase family.

Its subcellular location is the cytoplasm. The catalysed reaction is D-erythro-1-(imidazol-4-yl)glycerol 3-phosphate = 3-(imidazol-4-yl)-2-oxopropyl phosphate + H2O. It functions in the pathway amino-acid biosynthesis; L-histidine biosynthesis; L-histidine from 5-phospho-alpha-D-ribose 1-diphosphate: step 6/9. In Rhodopseudomonas palustris (strain TIE-1), this protein is Imidazoleglycerol-phosphate dehydratase.